The sequence spans 685 residues: Linoleate 9/13-lipoxygenase (685 aa).

The N-terminal stretch at 1 to 19 (MKRRSVLLSGVALSGTALA) is a signal peptide. The region spanning 122-685 (ASLPASAAAQ…PSRIPASTNI (564 aa)) is the Lipoxygenase domain. 5 residues coordinate Fe cation: H377, H382, H555, N559, and I685.

Belongs to the lipoxygenase family. Monomer. It depends on Fe cation as a cofactor.

The protein localises to the periplasm. The catalysed reaction is (9Z,12Z)-octadecadienoate + O2 = (9S)-hydroperoxy-(10E,12Z)-octadecadienoate. It carries out the reaction (9Z)-octadecenoate + O2 = (8E,10S)-10-hydroperoxy-octadeca-8-enoate. The enzyme catalyses (9Z,12Z)-octadecadienoate + O2 = (8E,10S,12Z)-10-hydroperoxyoctadeca-8,12-dienoate. It catalyses the reaction (9Z,12Z,15Z)-octadecatrienoate + O2 = (8E,10S,12Z,15Z)-10-hydroperoxyoctadeca-8,12,15-trienoate. The catalysed reaction is (9Z,12Z)-octadecadienoate + O2 = (13S)-hydroperoxy-(9Z,11E)-octadecadienoate. It carries out the reaction (9Z,12Z,15Z)-octadecatrienoate + O2 = (13S)-hydroperoxy-(9Z,11E,15Z)-octadecatrienoate. With respect to regulation, inhibited by Ba(2+), Zn(2+) and Fe(3+). Its function is as follows. In presence of oxygen, converts linoleate into (9S)-hydroperoxy-10,12-octadecenoate (9HPOD), which spontaneously decomposes to the corresponding 9-hydroxy-10,12-octadecenoate (9HOD), and into 13-hydroperoxy-9,11-octadecenoate (13HPOD) which spontaneously decomposes to the corresponding 13-hydroxy-9,11-octadecenoate (13HOD). Also active on linolenate. To a lesser extent, is also able to convert oleate into (10S)-hydroperoxy-8E-octadecenoate, which spontaneously decomposes to the corresponding 10-hydroxy-8E-octadecenoate. Is almost not active on arachidonate. The protein is Linoleate 9/13-lipoxygenase (lox) of Pseudomonas aeruginosa.